A 152-amino-acid chain; its full sequence is Large ribosomal subunit protein bL9 (152 aa).

It belongs to the bacterial ribosomal protein bL9 family.

Functionally, binds to the 23S rRNA. The sequence is that of Large ribosomal subunit protein bL9 from Parasynechococcus marenigrum (strain WH8102).